A 185-amino-acid polypeptide reads, in one-letter code: ATP-dependent protease subunit HslV (185 aa).

The active site involves T12. Residues A168, C171, and T174 each contribute to the Na(+) site.

Belongs to the peptidase T1B family. HslV subfamily. As to quaternary structure, a double ring-shaped homohexamer of HslV is capped on each side by a ring-shaped HslU homohexamer. The assembly of the HslU/HslV complex is dependent on binding of ATP.

The protein resides in the cytoplasm. It catalyses the reaction ATP-dependent cleavage of peptide bonds with broad specificity.. Its activity is regulated as follows. Allosterically activated by HslU binding. Functionally, protease subunit of a proteasome-like degradation complex believed to be a general protein degrading machinery. The polypeptide is ATP-dependent protease subunit HslV (Roseobacter denitrificans (strain ATCC 33942 / OCh 114) (Erythrobacter sp. (strain OCh 114))).